The sequence spans 611 residues: Phosphoenolpyruvate carboxykinase [GTP] (611 aa).

Residues R82 and 222–224 each bind substrate; that span reads YGG. Residues K231 and H251 each contribute to the Mn(2+) site. Residue S273 participates in substrate binding. 274–279 serves as a coordination point for GTP; that stretch reads ACGKTN. The active site involves C275. D298 contributes to the Mn(2+) binding site. 389-391 provides a ligand contact to substrate; the sequence is NSR. Residues R391, R422, and 517-520 each bind GTP; that span reads FGDN.

It belongs to the phosphoenolpyruvate carboxykinase [GTP] family. Monomer. The cofactor is Mn(2+).

It localises to the cytoplasm. The catalysed reaction is oxaloacetate + GTP = phosphoenolpyruvate + GDP + CO2. The protein operates within carbohydrate biosynthesis; gluconeogenesis. Its function is as follows. Catalyzes the conversion of oxaloacetate (OAA) to phosphoenolpyruvate (PEP), the rate-limiting step in the metabolic pathway that produces glucose from lactate and other precursors derived from the citric acid cycle. This chain is Phosphoenolpyruvate carboxykinase [GTP], found in Arthrobacter sp. (strain FB24).